The sequence spans 320 residues: o-succinylbenzoate synthase (320 aa).

Lys133 serves as the catalytic Proton donor. 3 residues coordinate Mg(2+): Asp161, Glu190, and Asp213. The Proton acceptor role is filled by Lys235.

The protein belongs to the mandelate racemase/muconate lactonizing enzyme family. MenC type 1 subfamily. The cofactor is a divalent metal cation.

The enzyme catalyses (1R,6R)-6-hydroxy-2-succinyl-cyclohexa-2,4-diene-1-carboxylate = 2-succinylbenzoate + H2O. It functions in the pathway quinol/quinone metabolism; 1,4-dihydroxy-2-naphthoate biosynthesis; 1,4-dihydroxy-2-naphthoate from chorismate: step 4/7. The protein operates within quinol/quinone metabolism; menaquinone biosynthesis. Converts 2-succinyl-6-hydroxy-2,4-cyclohexadiene-1-carboxylate (SHCHC) to 2-succinylbenzoate (OSB). In Salmonella paratyphi B (strain ATCC BAA-1250 / SPB7), this protein is o-succinylbenzoate synthase.